The chain runs to 380 residues: Cysteine protease ATG4A (380 aa).

Catalysis depends on Cys60, which acts as the Nucleophile. Residues Asp262 and His264 contribute to the active site. Positions 375–378 (FEIL) match the LIR motif.

It belongs to the peptidase C54 family.

The protein resides in the cytoplasm. The catalysed reaction is [protein]-C-terminal L-amino acid-glycyl-phosphatidylethanolamide + H2O = [protein]-C-terminal L-amino acid-glycine + a 1,2-diacyl-sn-glycero-3-phosphoethanolamine. Its function is as follows. Cysteine protease that plays a key role in autophagy by mediating both proteolytic activation and delipidation of ATG8 family proteins. The protease activity is required for proteolytic activation of ATG8 family proteins: cleaves the C-terminal amino acid of ATG8 proteins to reveal a C-terminal glycine. Exposure of the glycine at the C-terminus is essential for ATG8 proteins conjugation to phosphatidylethanolamine (PE) and insertion to membranes, which is necessary for autophagy. Protease activity is also required to counteract formation of high-molecular weight conjugates of ATG8 proteins (ATG8ylation): acts as a deubiquitinating-like enzyme that removes ATG8 conjugated to other proteins, such as ATG3. In addition to the protease activity, also mediates delipidation of ATG8 family proteins. Catalyzes delipidation of PE-conjugated forms of ATG8 proteins during macroautophagy. The polypeptide is Cysteine protease ATG4A (Gallus gallus (Chicken)).